A 195-amino-acid chain; its full sequence is Sec-independent protein translocase protein TatB (195 aa).

Residues 2–22 (FSNVGWGEVLVLLIVALFLIG) form a helical membrane-spanning segment. Residues 103 to 125 (VKDTVDTVRKPNLRESLKADKTK) show a composition bias toward basic and acidic residues. Residues 103–195 (VKDTVDTVRK…APGYGWEDVT (93 aa)) are disordered. Composition is skewed to polar residues over residues 127–139 (SAQP…SGSA) and 146–155 (VTQQSNAGES).

This sequence belongs to the TatB family. In terms of assembly, the Tat system comprises two distinct complexes: a TatABC complex, containing multiple copies of TatA, TatB and TatC subunits, and a separate TatA complex, containing only TatA subunits. Substrates initially bind to the TatABC complex, which probably triggers association of the separate TatA complex to form the active translocon.

The protein resides in the cell membrane. Part of the twin-arginine translocation (Tat) system that transports large folded proteins containing a characteristic twin-arginine motif in their signal peptide across membranes. Together with TatC, TatB is part of a receptor directly interacting with Tat signal peptides. TatB may form an oligomeric binding site that transiently accommodates folded Tat precursor proteins before their translocation. This is Sec-independent protein translocase protein TatB from Corynebacterium jeikeium (strain K411).